Consider the following 604-residue polypeptide: Phenylalanine--tRNA ligase beta subunit (604 aa).

A B5 domain is found at 327–402; the sequence is YFQEKREVAH…LGRTLDRFSP (76 aa). Mg(2+)-binding residues include D380, D386, E389, and E390.

The protein belongs to the phenylalanyl-tRNA synthetase beta subunit family. Type 2 subfamily. As to quaternary structure, tetramer of two alpha and two beta subunits. Requires Mg(2+) as cofactor.

It is found in the cytoplasm. The enzyme catalyses tRNA(Phe) + L-phenylalanine + ATP = L-phenylalanyl-tRNA(Phe) + AMP + diphosphate + H(+). The polypeptide is Phenylalanine--tRNA ligase beta subunit (Treponema pallidum subsp. pallidum (strain SS14)).